Reading from the N-terminus, the 501-residue chain is Phenylalanine--tRNA ligase alpha subunit (501 aa).

Residues Thr344, 383–385, and Phe424 contribute to the L-phenylalanine site; that span reads QID. Residue Glu426 coordinates Mg(2+). Position 449 (Phe449) interacts with L-phenylalanine.

This sequence belongs to the class-II aminoacyl-tRNA synthetase family. Phe-tRNA synthetase alpha subunit type 2 subfamily. As to quaternary structure, tetramer of two alpha and two beta subunits. It depends on Mg(2+) as a cofactor.

It is found in the cytoplasm. The enzyme catalyses tRNA(Phe) + L-phenylalanine + ATP = L-phenylalanyl-tRNA(Phe) + AMP + diphosphate + H(+). The chain is Phenylalanine--tRNA ligase alpha subunit from Thermococcus kodakarensis (strain ATCC BAA-918 / JCM 12380 / KOD1) (Pyrococcus kodakaraensis (strain KOD1)).